Here is a 152-residue protein sequence, read N- to C-terminus: Arginine repressor (152 aa).

The protein belongs to the ArgR family.

Its subcellular location is the cytoplasm. It functions in the pathway amino-acid biosynthesis; L-arginine biosynthesis [regulation]. Regulates arginine biosynthesis genes. The protein is Arginine repressor of Thermotoga sp. (strain RQ2).